The primary structure comprises 86 residues: MGSEINDNTIEFDVLKNKEDLTKEILNEVYNSLKEKGYNPINQLVGYLISGDPTYITNYNGARALVRKLERDEILEEVLKSYLGIK.

It belongs to the UPF0297 family.

The polypeptide is UPF0297 protein CA_C1679 (Clostridium acetobutylicum (strain ATCC 824 / DSM 792 / JCM 1419 / IAM 19013 / LMG 5710 / NBRC 13948 / NRRL B-527 / VKM B-1787 / 2291 / W)).